Here is a 219-residue protein sequence, read N- to C-terminus: Tetratricopeptide repeat protein 9A (219 aa).

A disordered region spans residues 1 to 49; sequence MERKGLAARSSGNPSPPALGEGPRPVPPPCVPSGGGAPERGQAGTAAEP. Residues 56–89 form a TPR 1 repeat; it reads AHEFKSQGAQCYKDKKFREAIGKYHRALLELKGL. Residues 94-115 form a disordered region; it reads EERDARPASSAGVPKSSRLSEE. Serine 102 is modified (phosphoserine). TPR repeat units lie at residues 125–160 and 161–194; these read IDCY…EGEN and FKAL…QPTD.

This sequence belongs to the TTC9 family.

The chain is Tetratricopeptide repeat protein 9A (Ttc9) from Mus musculus (Mouse).